The primary structure comprises 791 residues: Transient receptor potential cation channel subfamily V member 3 (791 aa).

Disordered regions lie at residues 1–37 (MNAH…LTPT), 52–71 (PNPT…MDSN), and 76–113 (LSGN…EEQR). Residues 1–430 (MNAHSKEMAP…TLEPLHTLLH (430 aa)) lie on the Cytoplasmic side of the membrane. The segment covering 95 to 105 (ETPSNPNSPSA) has biased composition (polar residues). ANK repeat units lie at residues 117–148 (KRLK…LCRR), 170–198 (TCLM…EEND), 214–243 (EGQT…DVNA), 261–291 (FGET…DITS), 298–330 (NILH…RSGN), 340–362 (DGLT…YILS), and 398–420 (TTDN…HEML). The chain crosses the membrane as a helical span at residues 431-460 (TKWKKFAKYMFFLSFCFYFFYNITLTLVSY). Residues 461-479 (YRPREDEDLPHPLALTHKM) lie on the Extracellular side of the membrane. Residues 480–508 (SWLQLLGRMFVLIWATCISVKEGIAIFLL) traverse the membrane as a helical segment. Residues 509 to 519 (RPSDLQSILSD) lie on the Cytoplasmic side of the membrane. The chain crosses the membrane as a helical span at residues 520 to 540 (AWFHFVFFVQAVLVILSVFLY). At 541 to 545 (LFAYK) the chain is on the extracellular side. Residues 546–566 (EYLACLVLAMALGWANMLYYT) traverse the membrane as a helical segment. At 567–569 (RGF) the chain is on the cytoplasmic side. The chain crosses the membrane as a helical span at residues 570 to 608 (QSMGMYSVMIQKVILHDVLKFLFVYILFLLGFGVALASL). Residues 609–620 (IEKCSKDKKDCS) lie on the Extracellular side of the membrane. An intramembrane region (pore-forming) is located at residues 621-646 (SYGSFSDAVLELFKLTIGLGDLNIQQ). G638 contributes to the Na(+) binding site. Residues 647 to 649 (NST) lie on the Extracellular side of the membrane. A helical transmembrane segment spans residues 650 to 686 (YPILFLFLLITYVILTFVLLLNMLIALMGETVENVSK). Over 687 to 791 (ESERIWRLQR…ELDEFPETSV (105 aa)) the chain is Cytoplasmic.

The protein belongs to the transient receptor (TC 1.A.4) family. TrpV subfamily. TRPV3 sub-subfamily. Homotetramer. May convert from a homotetramer to a homopentamer to allow pore dilation. Interacts with TRPV1; may form a heteromeric channel with TRPV1. Interacts with SNX11; this interaction promotes TRPV3 trafficking from the cell membrane to lysosome for degradation. As to expression, expressed in keratinocytes and hair follicles.

Its subcellular location is the cell membrane. The protein resides in the cytoplasm. It localises to the lysosome. It carries out the reaction Ca(2+)(in) = Ca(2+)(out). The enzyme catalyses Mg(2+)(in) = Mg(2+)(out). The catalysed reaction is Na(+)(in) = Na(+)(out). It catalyses the reaction K(+)(in) = K(+)(out). Activated by cannabinoid that binds to the vanilloid binding pocket. Diphenylboronic anhydride induces pore dilation and enhances cation permeability by promoting the conversion to a homopentamer. Its function is as follows. Non-selective calcium permeant cation channel. It is activated by innocuous (warm) temperatures and shows an increased response at noxious temperatures greater than 39 degrees Celsius. Activation exhibits an outward rectification. The channel pore can dilate to provide permeability to larger cations. May associate with TRPV1 and may modulate its activity. Is a negative regulator of hair growth and cycling: TRPV3-coupled signaling suppresses keratinocyte proliferation in hair follicles and induces apoptosis and premature hair follicle regression (catagen). This Mus musculus (Mouse) protein is Transient receptor potential cation channel subfamily V member 3 (Trpv3).